Consider the following 745-residue polypeptide: 5-methyltetrahydropteroyltriglutamate--homocysteine methyltransferase (745 aa).

5-methyltetrahydropteroyltri-L-glutamate-binding positions include 19 to 22 (RELK) and lysine 119. L-homocysteine is bound by residues 418–420 (IGS) and glutamate 471. Residues 418–420 (IGS) and glutamate 471 each bind L-methionine. Residues 502-503 (RC) and tryptophan 548 each bind 5-methyltetrahydropteroyltri-L-glutamate. Residue aspartate 586 participates in L-homocysteine binding. Aspartate 586 contacts L-methionine. A 5-methyltetrahydropteroyltri-L-glutamate-binding site is contributed by glutamate 592. 3 residues coordinate Zn(2+): histidine 628, cysteine 630, and glutamate 652. Catalysis depends on histidine 681, which acts as the Proton donor. Zn(2+) is bound at residue cysteine 713.

It belongs to the vitamin-B12 independent methionine synthase family. The cofactor is Zn(2+).

The catalysed reaction is 5-methyltetrahydropteroyltri-L-glutamate + L-homocysteine = tetrahydropteroyltri-L-glutamate + L-methionine. It participates in amino-acid biosynthesis; L-methionine biosynthesis via de novo pathway; L-methionine from L-homocysteine (MetE route): step 1/1. Functionally, catalyzes the transfer of a methyl group from 5-methyltetrahydrofolate to homocysteine resulting in methionine formation. This Corynebacterium glutamicum (strain ATCC 13032 / DSM 20300 / JCM 1318 / BCRC 11384 / CCUG 27702 / LMG 3730 / NBRC 12168 / NCIMB 10025 / NRRL B-2784 / 534) protein is 5-methyltetrahydropteroyltriglutamate--homocysteine methyltransferase.